Here is a 510-residue protein sequence, read N- to C-terminus: 2,3-bisphosphoglycerate-independent phosphoglycerate mutase (510 aa).

Asp12 serves as a coordination point for Mn(2+). Tyr36 bears the Phosphotyrosine mark. Ser62 contacts Mn(2+). Ser62 (phosphoserine intermediate) is an active-site residue. Substrate-binding positions include His123, 153–154, Arg185, Arg191, 261–264, and Lys336; these read RD and RPDR. Mn(2+)-binding residues include Asp403, His407, Asp444, His445, and His462.

The protein belongs to the BPG-independent phosphoglycerate mutase family. In terms of assembly, monomer. Mn(2+) serves as cofactor.

The enzyme catalyses (2R)-2-phosphoglycerate = (2R)-3-phosphoglycerate. Its pathway is carbohydrate degradation; glycolysis; pyruvate from D-glyceraldehyde 3-phosphate: step 3/5. Functionally, essential for rapid growth and for sporulation. Catalyzes the interconversion of 2-phosphoglycerate and 3-phosphoglycerate. This chain is 2,3-bisphosphoglycerate-independent phosphoglycerate mutase, found in Halalkalibacterium halodurans (strain ATCC BAA-125 / DSM 18197 / FERM 7344 / JCM 9153 / C-125) (Bacillus halodurans).